The sequence spans 157 residues: Small ribosomal subunit protein uS7 (157 aa).

Belongs to the universal ribosomal protein uS7 family. In terms of assembly, part of the 30S ribosomal subunit. Contacts proteins S9 and S11.

Its function is as follows. One of the primary rRNA binding proteins, it binds directly to 16S rRNA where it nucleates assembly of the head domain of the 30S subunit. Is located at the subunit interface close to the decoding center, probably blocks exit of the E-site tRNA. The polypeptide is Small ribosomal subunit protein uS7 (Caldicellulosiruptor saccharolyticus (strain ATCC 43494 / DSM 8903 / Tp8T 6331)).